The chain runs to 405 residues: Elongation factor Tu (405 aa).

The region spanning 10–213 is the tr-type G domain; it reads KEHVNVGTIG…AMDEYIPTPQ (204 aa). The G1 stretch occupies residues 19–26; sequence GHVDHGKS. 19 to 26 contributes to the GTP binding site; sequence GHVDHGKS. S26 provides a ligand contact to Mg(2+). A G2 region spans residues 64–68; it reads GITIN. Positions 85–88 are G3; sequence DCPG. Residues 85 to 89 and 140 to 143 each bind GTP; these read DCPGH and NKCD. A G4 region spans residues 140–143; it reads NKCD. The tract at residues 178 to 180 is G5; the sequence is SAL.

This sequence belongs to the TRAFAC class translation factor GTPase superfamily. Classic translation factor GTPase family. EF-Tu/EF-1A subfamily. As to quaternary structure, monomer.

The protein resides in the cytoplasm. The catalysed reaction is GTP + H2O = GDP + phosphate + H(+). In terms of biological role, GTP hydrolase that promotes the GTP-dependent binding of aminoacyl-tRNA to the A-site of ribosomes during protein biosynthesis. This is Elongation factor Tu from Aquifex aeolicus (strain VF5).